The chain runs to 547 residues: Mucin-13 (547 aa).

Low complexity predominate over residues 1–210 (MSQSSGGTST…TVTSSSSTGS (210 aa)). Residues 1–218 (MSQSSGGTST…GSNDPCNSNP (218 aa)) form a disordered region. Residues 210–249 (SNDPCNSNPCKSPASCVKLYDSYFCLCLEGYYYNNSSSCV) form the EGF-like 1 domain. 3 cysteine pairs are disulfide-bonded: Cys214-Cys225, Cys219-Cys234, and Cys236-Cys248. Residues Asn243, Asn244, and Asn263 are each glycosylated (N-linked (GlcNAc...) asparagine). The region spanning 250-366 (KGTTFPGEIG…ERYFQQDRCD (117 aa)) is the SEA domain. EGF-like domains are found at residues 361-401 (QQDR…PFCV) and 401-441 (VAPT…GKCE). Intrachain disulfides connect Cys365–Cys378, Cys370–Cys384, Cys386–Cys400, Cys409–Cys427, and Cys429–Cys440. The helical transmembrane segment at 459–479 (ILTIVGTIAGAFILILLIVFI) threads the bilayer. Topologically, residues 480–547 (VSMRSKNKKK…NHRSMPRPDY (68 aa)) are cytoplasmic. The disordered stretch occupies residues 525–547 (KTGVPSQTSNPYANHRSMPRPDY).

Homodimer of beta subunits. Post-translationally, cleaved into two subunits, alpha and beta, probably between the first EGF domain and the SEA domain. Beta subunit contains the cytoplasmic tail and alpha subunit the extracellular tail. The homooligomerization into dimers is dependent on intrachain disulfide bonds. In terms of processing, highly glycosylated.

Its subcellular location is the cell membrane. The protein resides in the secreted. Functionally, epithelial and hemopoietic transmembrane mucin that may play a role in cell signaling. This is Mucin-13 (Muc13) from Rattus norvegicus (Rat).